Here is a 341-residue protein sequence, read N- to C-terminus: Elongation factor Ts (341 aa).

The segment at 80 to 83 (TDFV) is involved in Mg(2+) ion dislocation from EF-Tu.

It belongs to the EF-Ts family.

The protein resides in the cytoplasm. Associates with the EF-Tu.GDP complex and induces the exchange of GDP to GTP. It remains bound to the aminoacyl-tRNA.EF-Tu.GTP complex up to the GTP hydrolysis stage on the ribosome. The protein is Elongation factor Ts of Lactobacillus acidophilus (strain ATCC 700396 / NCK56 / N2 / NCFM).